The chain runs to 274 residues: Large ribosomal subunit protein uL2 (274 aa).

The tract at residues 221-256 is disordered; the sequence is RGTAMNPVDHPHGGGEGRNFGKHPVTPWGVPTKGYK.

This sequence belongs to the universal ribosomal protein uL2 family. As to quaternary structure, part of the 50S ribosomal subunit. Forms a bridge to the 30S subunit in the 70S ribosome.

Functionally, one of the primary rRNA binding proteins. Required for association of the 30S and 50S subunits to form the 70S ribosome, for tRNA binding and peptide bond formation. It has been suggested to have peptidyltransferase activity; this is somewhat controversial. Makes several contacts with the 16S rRNA in the 70S ribosome. The sequence is that of Large ribosomal subunit protein uL2 from Thioalkalivibrio sulfidiphilus (strain HL-EbGR7).